Consider the following 394-residue polypeptide: Elongation factor Tu (394 aa).

The tr-type G domain occupies 10–204; it reads KAHVNIGTIG…SVDSYIPTPT (195 aa). Residues 19–26 form a G1 region; that stretch reads GHIDHGKT. 19-26 contributes to the GTP binding site; sequence GHIDHGKT. Mg(2+) is bound at residue threonine 26. The G2 stretch occupies residues 60–64; sequence GITIN. The segment at 81 to 84 is G3; sequence DCPG. GTP-binding positions include 81–85 and 136–139; these read DCPGH and NKCD. The G4 stretch occupies residues 136-139; that stretch reads NKCD. Positions 174 to 176 are G5; it reads SAL.

Belongs to the TRAFAC class translation factor GTPase superfamily. Classic translation factor GTPase family. EF-Tu/EF-1A subfamily. Monomer.

The protein resides in the cytoplasm. The enzyme catalyses GTP + H2O = GDP + phosphate + H(+). Its function is as follows. GTP hydrolase that promotes the GTP-dependent binding of aminoacyl-tRNA to the A-site of ribosomes during protein biosynthesis. This chain is Elongation factor Tu, found in Malacoplasma penetrans (strain HF-2) (Mycoplasma penetrans).